The primary structure comprises 104 residues: SOSS complex subunit C (104 aa).

This sequence belongs to the SOSS-C family. In terms of assembly, belongs to the multiprotein complex Integrator. Component of the SOSS complex, composed of SOSS-B (SOSS-B1/NABP2 or SOSS-B2/NABP1), SOSS-A/INTS3 and SOSS-C/INIP.

It localises to the nucleus. Its function is as follows. Component of the SOSS complex, a multiprotein complex that functions downstream of the MRN complex to promote DNA repair and G2/M checkpoint. The SOSS complex associates with single-stranded DNA at DNA lesions and influences diverse endpoints in the cellular DNA damage response including cell-cycle checkpoint activation, recombinational repair and maintenance of genomic stability. Required for efficient homologous recombination-dependent repair of double-strand breaks (DSBs). The protein is SOSS complex subunit C (INIP) of Taeniopygia guttata (Zebra finch).